Here is a 270-residue protein sequence, read N- to C-terminus: Phosphonoacetaldehyde hydrolase (270 aa).

D11 acts as the Nucleophile in catalysis. Positions 11 and 13 each coordinate Mg(2+). K53 functions as the Schiff-base intermediate with substrate in the catalytic mechanism. D187 serves as a coordination point for Mg(2+).

It belongs to the HAD-like hydrolase superfamily. PhnX family. Homodimer. Mg(2+) serves as cofactor.

It carries out the reaction phosphonoacetaldehyde + H2O = acetaldehyde + phosphate + H(+). Involved in phosphonate degradation. In Salmonella paratyphi C (strain RKS4594), this protein is Phosphonoacetaldehyde hydrolase.